The following is a 428-amino-acid chain: Elongation factor 1-alpha (428 aa).

The tr-type G domain maps to 5 to 217; that stretch reads KPHVNIVFIG…DQIPEPEKPV (213 aa). The segment at 14–21 is G1; that stretch reads GHVDHGKS. 14–21 serves as a coordination point for GTP; it reads GHVDHGKS. Ser21 is a Mg(2+) binding site. Residues 68–72 are G2; that stretch reads GITID. The tract at residues 89–92 is G3; sequence DAPG. GTP is bound by residues 89–93 and 144–147; these read DAPGH and NKMD. The segment at 144-147 is G4; the sequence is NKMD. Positions 181–183 are G5; the sequence is SAW.

Belongs to the TRAFAC class translation factor GTPase superfamily. Classic translation factor GTPase family. EF-Tu/EF-1A subfamily.

Its subcellular location is the cytoplasm. It catalyses the reaction GTP + H2O = GDP + phosphate + H(+). In terms of biological role, GTP hydrolase that promotes the GTP-dependent binding of aminoacyl-tRNA to the A-site of ribosomes during protein biosynthesis. This Pyrococcus abyssi (strain GE5 / Orsay) protein is Elongation factor 1-alpha.